The sequence spans 429 residues: Hydrogenobyrinate a,c-diamide synthase (429 aa).

The GATase cobBQ-type domain maps to 240–429 (RTAVARDVAF…SFMHLIDFSE (190 aa)). The active-site Nucleophile is cysteine 323.

It belongs to the CobB/CbiA family. The cofactor is Mg(2+).

The catalysed reaction is hydrogenobyrinate + 2 L-glutamine + 2 ATP + 2 H2O = hydrogenobyrinate a,c-diamide + 2 L-glutamate + 2 ADP + 2 phosphate + 2 H(+). It participates in cofactor biosynthesis; adenosylcobalamin biosynthesis; cob(II)yrinate a,c-diamide from precorrin-2 (aerobic route): step 9/10. Catalyzes the ATP-dependent amidation of the two carboxylate groups at positions a and c of hydrogenobyrinate, using either L-glutamine or ammonia as the nitrogen source. This is Hydrogenobyrinate a,c-diamide synthase from Rhizobium meliloti (strain 1021) (Ensifer meliloti).